The primary structure comprises 87 residues: Cell division topological specificity factor (87 aa).

The protein belongs to the MinE family.

In terms of biological role, prevents the cell division inhibition by proteins MinC and MinD at internal division sites while permitting inhibition at polar sites. This ensures cell division at the proper site by restricting the formation of a division septum at the midpoint of the long axis of the cell. This chain is Cell division topological specificity factor, found in Blochmanniella pennsylvanica (strain BPEN).